Here is a 513-residue protein sequence, read N- to C-terminus: Activin receptor type-2A (513 aa).

The signal sequence occupies residues 1 to 19 (MGAAAKLAFAVFLISCSSG). Residues 20-135 (AILGRSETQE…TSNPVTPKPP (116 aa)) lie on the Extracellular side of the membrane. Cystine bridges form between Cys30-Cys60, Cys50-Cys78, Cys85-Cys104, Cys91-Cys103, and Cys105-Cys110. N-linked (GlcNAc...) asparagine glycans are attached at residues Asn43 and Asn66. Residues 136-161 (YYNILLYSLVPLMLIAGIVICAFWVY) form a helical membrane-spanning segment. Residues 162–513 (RHHKMAYPPV…VDFPPKESSL (352 aa)) lie on the Cytoplasmic side of the membrane. Residues 192 to 485 (LQLLEVKARG…GERITQMQRL (294 aa)) enclose the Protein kinase domain. ATP contacts are provided by residues 198 to 206 (KARGRFGCV) and Lys219. Asp322 acts as the Proton acceptor in catalysis.

Belongs to the protein kinase superfamily. TKL Ser/Thr protein kinase family. TGFB receptor subfamily. As to quaternary structure, part of a complex consisting of MAGI2/ARIP1, ACVR2A, ACVR1B and SMAD3. Interacts with MAGI2/ARIP1. Interacts with type I receptor ACVR1. Interacts with BMP7. Interacts with TSC22D1/TSC-22. Interacts with activin A/INHBA. Mg(2+) is required as a cofactor. It depends on Mn(2+) as a cofactor.

The protein resides in the cell membrane. The enzyme catalyses L-threonyl-[receptor-protein] + ATP = O-phospho-L-threonyl-[receptor-protein] + ADP + H(+). It catalyses the reaction L-seryl-[receptor-protein] + ATP = O-phospho-L-seryl-[receptor-protein] + ADP + H(+). Functionally, on ligand binding, forms a receptor complex consisting of two type II and two type I transmembrane serine/threonine kinases. Type II receptors phosphorylate and activate type I receptors which autophosphorylate, then bind and activate SMAD transcriptional regulators. Receptor for activin A, activin B and inhibin A. Mediates induction of adipogenesis by GDF6. This chain is Activin receptor type-2A, found in Homo sapiens (Human).